The chain runs to 396 residues: Acetate kinase (396 aa).

Residue Asn-8 participates in Mg(2+) binding. Lys-15 lines the ATP pocket. Arg-89 provides a ligand contact to substrate. Asp-146 functions as the Proton donor/acceptor in the catalytic mechanism. ATP contacts are provided by residues 206–210 (HIGNG), 283–285 (DMR), and 331–335 (GVGEN). Glu-383 contacts Mg(2+).

The protein belongs to the acetokinase family. In terms of assembly, homodimer. Mg(2+) is required as a cofactor. The cofactor is Mn(2+).

The protein localises to the cytoplasm. It carries out the reaction acetate + ATP = acetyl phosphate + ADP. It functions in the pathway metabolic intermediate biosynthesis; acetyl-CoA biosynthesis; acetyl-CoA from acetate: step 1/2. Catalyzes the formation of acetyl phosphate from acetate and ATP. Can also catalyze the reverse reaction. The sequence is that of Acetate kinase from Streptococcus pneumoniae (strain 70585).